Reading from the N-terminus, the 519-residue chain is 2-isopropylmalate synthase (519 aa).

In terms of domain architecture, Pyruvate carboxyltransferase spans 12 to 274 (VVIFDTTLRD…WCNVESTTLT (263 aa)). Mn(2+) is bound by residues Asp21, His209, His211, and Asn245. The regulatory domain stretch occupies residues 398-519 (RLVSLTVIAG…QREAPVAAAS (122 aa)).

It belongs to the alpha-IPM synthase/homocitrate synthase family. LeuA type 1 subfamily. As to quaternary structure, homodimer. The cofactor is Mn(2+).

It is found in the cytoplasm. The catalysed reaction is 3-methyl-2-oxobutanoate + acetyl-CoA + H2O = (2S)-2-isopropylmalate + CoA + H(+). It functions in the pathway amino-acid biosynthesis; L-leucine biosynthesis; L-leucine from 3-methyl-2-oxobutanoate: step 1/4. Catalyzes the condensation of the acetyl group of acetyl-CoA with 3-methyl-2-oxobutanoate (2-ketoisovalerate) to form 3-carboxy-3-hydroxy-4-methylpentanoate (2-isopropylmalate). The protein is 2-isopropylmalate synthase of Afipia carboxidovorans (strain ATCC 49405 / DSM 1227 / KCTC 32145 / OM5) (Oligotropha carboxidovorans).